The sequence spans 339 residues: ATPase GET3 (339 aa).

Position 34–41 (34–41 (KGGVGKTT)) interacts with ATP. Asp-63 is a catalytic residue. ATP contacts are provided by Glu-243 and Asn-270. Zn(2+)-binding residues include Cys-281 and Cys-284.

It belongs to the arsA ATPase family. Homodimer.

The protein resides in the cytoplasm. It localises to the endoplasmic reticulum. Functionally, ATPase required for the post-translational delivery of tail-anchored (TA) proteins to the endoplasmic reticulum. Recognizes and selectively binds the transmembrane domain of TA proteins in the cytosol. This complex then targets to the endoplasmic reticulum by membrane-bound receptors, where the tail-anchored protein is released for insertion. This process is regulated by ATP binding and hydrolysis. ATP binding drives the homodimer towards the closed dimer state, facilitating recognition of newly synthesized TA membrane proteins. ATP hydrolysis is required for insertion. Subsequently, the homodimer reverts towards the open dimer state, lowering its affinity for the membrane-bound receptor, and returning it to the cytosol to initiate a new round of targeting. The polypeptide is ATPase GET3 (Coccidioides immitis (strain RS) (Valley fever fungus)).